The primary structure comprises 189 residues: Probable nicotinate-nucleotide adenylyltransferase (189 aa).

The protein belongs to the NadD family.

The enzyme catalyses nicotinate beta-D-ribonucleotide + ATP + H(+) = deamido-NAD(+) + diphosphate. It participates in cofactor biosynthesis; NAD(+) biosynthesis; deamido-NAD(+) from nicotinate D-ribonucleotide: step 1/1. Its function is as follows. Catalyzes the reversible adenylation of nicotinate mononucleotide (NaMN) to nicotinic acid adenine dinucleotide (NaAD). This Bacillus pumilus (strain SAFR-032) protein is Probable nicotinate-nucleotide adenylyltransferase.